Here is a 338-residue protein sequence, read N- to C-terminus: MLGKIALEEAFALPRFEEKTRWWASLFSTDAETHVKEITDINKIRIEHADKHGVGYQILSYTAPGVQDIWDPVEAQALAVEINDYIAEQVRVNPDRFGAFATLSMHNPKEAADELRRCVEKYGFKGALVNDTQRAGPDGDDMIFYDNADWDIFWQTCTELDVPFYMHPRNPTGTIYEKLWADRKWLVGPPLSFAHGVSLHVLGMVTNGVFDRHPKLQIIMGHLGEHVPFDMWRINHWFEDRKKLLGLAETCKKTIRDYFAENIWITTSGHFSTTTLNFCMAEVGSDRILFSIDYPFETFSDACEWFDNAELNGTDRLKIGRENAKKLFKLDSYKDSSA.

Cys-251 is a catalytic residue.

Belongs to the metallo-dependent hydrolases superfamily. In terms of assembly, homotetramer.

It catalyses the reaction 2,3-dihydroxybenzoate + H(+) = catechol + CO2. It participates in aromatic compound metabolism; benzoate degradation via hydroxylation. Functionally, has an absolute substrate specificity for 2,3-DHBA. This Aspergillus oryzae (strain ATCC 42149 / RIB 40) (Yellow koji mold) protein is 2,3-dihydroxybenzoate decarboxylase.